The primary structure comprises 590 residues: Plasmepsin V (590 aa).

At 1 to 544 (MNNYFLRKEN…EKENIFLKVS (544 aa)) the chain is on the lumenal side. Residues 33 to 81 (CNNVENKIDNVGKKIENVGKKIGDMENKNDNVENKNDNVGNKNDNVKNA) are a coiled coil. The 415-residue stretch at 100–514 (YFLDIDIGKP…DLQQNQIAFI (415 aa)) folds into the Peptidase A1 domain. Asp-118 is a catalytic residue. 7 disulfide bridges follow: Cys-128/Cys-211, Cys-131/Cys-134, Cys-155/Cys-166, Cys-160/Cys-171, Cys-259/Cys-518, Cys-389/Cys-434, and Cys-443/Cys-479. Residues 282-291 (KEKQKMDKSD) are compositionally biased toward basic and acidic residues. Positions 282 to 316 (KEKQKMDKSDNNSSNKGNVSIKLKNNDKNDDEENN) are disordered. Residues 292–304 (NNSSNKGNVSIKL) are compositionally biased toward low complexity. Asp-365 is a catalytic residue. The helical transmembrane segment at 545–565 (YINLYCLWLLLALTILLSLIL) threads the bilayer. The Cytoplasmic portion of the chain corresponds to 566 to 590 (YVRKMFYMDYFPLSDQNKSPIQEST).

Belongs to the peptidase A1 family. As to quaternary structure, component of a complex composed of SPC25 and PMV; the interaction is mediated via the transmembrane domains. The complex interacts with the SEC61 channel-forming translocon complex and is involved in the recognition and import of PEXEL motif-containing proteins into the ER for subsequent export. Post-translationally, it is not clear if the zymogen has a cleavable propeptide. In vitro, appears to be cleaved between Asn-80 and Ala-81. Cleavage of the putative propeptide is dispensable for catalytic activity.

It localises to the endoplasmic reticulum membrane. With respect to regulation, inhibited by peptidomimetic inhibitor WEHI-842. Inhibited by Cu(2+) and Hg(2+). During the asexual blood stage, plays an essential role in the export of several proteins into the host erythrocytes by cleaving the pentameric localization motif RxLxE/Q/D (termed Plasmodium export element (PEXEL)) located downstream of the N-terminal secretory signal sequence. Specifically, cleaves after the leucine residue in the RxLxE/Q/D (or RxLxxE) motif of exported proteins including RESA, EMP2, EMP3, KAHRP, RIF/Rifin and STEVOR. Also, by regulating protein export, plays an essential role in gametocyte development and thus, parasite transmission to the mosquito vector. The protein is Plasmepsin V of Plasmodium falciparum (isolate 3D7).